A 508-amino-acid polypeptide reads, in one-letter code: Pyruvate kinase, cytosolic isozyme (508 aa).

Substrate is bound at residue Arg48. Asn50, Ser52, Asp82, and Thr83 together coordinate K(+). 50-53 provides a ligand contact to ATP; the sequence is NFSH. Residues Arg89 and Lys174 each coordinate ATP. Mg(2+) is bound at residue Glu240. Gly263, Asp264, and Thr296 together coordinate substrate. Asp264 lines the Mg(2+) pocket.

The protein belongs to the pyruvate kinase family. As to quaternary structure, homotetramer. It depends on Mg(2+) as a cofactor. The cofactor is K(+).

The protein localises to the cytoplasm. The enzyme catalyses pyruvate + ATP = phosphoenolpyruvate + ADP + H(+). It functions in the pathway carbohydrate degradation; glycolysis; pyruvate from D-glyceraldehyde 3-phosphate: step 5/5. The chain is Pyruvate kinase, cytosolic isozyme from Nicotiana tabacum (Common tobacco).